We begin with the raw amino-acid sequence, 118 residues long: MRVKTGVVRHRRHKRLLKQARGFYSGRRKHFRKAKEQLERSLVYAYRDRRQKKRDFRKLWIVRINAAARLNDLNYSRFMHGLKLANIELDRKILADMAMNSPESFTKIADASKAALTK.

The protein belongs to the bacterial ribosomal protein bL20 family.

Binds directly to 23S ribosomal RNA and is necessary for the in vitro assembly process of the 50S ribosomal subunit. It is not involved in the protein synthesizing functions of that subunit. This is Large ribosomal subunit protein bL20 from Sulfurovum sp. (strain NBC37-1).